We begin with the raw amino-acid sequence, 131 residues long: Chorion class high-cysteine HCB protein 12 (131 aa).

A signal peptide spans 1-21; that stretch reads MAAKLIVFVCAIALVAQSVLG. Positions 22–46 are left arm; the sequence is TGCGCCCRGCGCGCGGCGCGCCENF. Residues 47–110 form a central domain region; sequence RVCSNSAAPT…GNGCVGITRS (64 aa). The interval 111–131 is right arm (Gly-rich tandem repeats); sequence CGGCGCGCGGCGCGCGGCGCC.

Belongs to the chorion protein family.

Its function is as follows. This protein is one of many from the eggshell of the silk moth. The protein is Chorion class high-cysteine HCB protein 12 of Bombyx mori (Silk moth).